The sequence spans 412 residues: [Pyruvate dehydrogenase (acetyl-transferring)] kinase isozyme 4, mitochondrial (412 aa).

The Histidine kinase domain occupies 138–368 (IIEYKDSCTV…DAIIYLKALS (231 aa)). ATP contacts are provided by residues 254 to 261 (ELFKNAMR), Asp293, 312 to 313 (ST), and 329 to 334 (GFGYGL).

This sequence belongs to the PDK/BCKDK protein kinase family. Homodimer. Interacts with the pyruvate dehydrogenase complex subunit DLAT, and is part of the multimeric pyruvate dehydrogenase complex that contains multiple copies of pyruvate dehydrogenase (E1), dihydrolipoamide acetyltransferase (DLAT, E2) and lipoamide dehydrogenase (DLD, E3). As to expression, detected in heart, white adipose tissue and muscle.

It localises to the mitochondrion matrix. The catalysed reaction is L-seryl-[pyruvate dehydrogenase E1 alpha subunit] + ATP = O-phospho-L-seryl-[pyruvate dehydrogenase E1 alpha subunit] + ADP + H(+). In terms of biological role, kinase that plays a key role in regulation of glucose and fatty acid metabolism and homeostasis via phosphorylation of the pyruvate dehydrogenase subunits PDHA1 and PDHA2. This inhibits pyruvate dehydrogenase activity, and thereby regulates metabolite flux through the tricarboxylic acid cycle, down-regulates aerobic respiration and inhibits the formation of acetyl-coenzyme A from pyruvate. Inhibition of pyruvate dehydrogenase decreases glucose utilization and increases fat metabolism in response to prolonged fasting and starvation. Plays an important role in maintaining normal blood glucose levels under starvation, and is involved in the insulin signaling cascade. Via its regulation of pyruvate dehydrogenase activity, plays an important role in maintaining normal blood pH and in preventing the accumulation of ketone bodies under starvation. In the fed state, mediates cellular responses to glucose levels and to a high-fat diet. Regulates both fatty acid oxidation and de novo fatty acid biosynthesis. Plays a role in the generation of reactive oxygen species. Protects detached epithelial cells against anoikis. Plays a role in cell proliferation via its role in regulating carbohydrate and fatty acid metabolism. The sequence is that of [Pyruvate dehydrogenase (acetyl-transferring)] kinase isozyme 4, mitochondrial (PDK4) from Rhinolophus ferrumequinum (Greater horseshoe bat).